The following is a 497-amino-acid chain: Di-/tripeptide transporter (497 aa).

The next 12 helical transmembrane spans lie at 3 to 23 (AILL…MSQT), 26 to 46 (ASIM…GGWL), 57 to 77 (VFYG…PAGV), 84 to 104 (IALI…MVGG), 119 to 139 (IFVF…PWAA), 155 to 175 (AGFS…VLGG), 199 to 219 (IKWV…MAGV), 227 to 247 (VITL…VMMF), 294 to 314 (FIIL…KVII), 321 to 341 (LVLL…TFVL), 372 to 392 (GIEI…LIIL), and 452 to 472 (IVII…WSYI).

This sequence belongs to the major facilitator superfamily. Proton-dependent oligopeptide transporter (POT/PTR) (TC 2.A.17) family.

The protein localises to the cell membrane. Functionally, proton-dependent uptake of di- or tri-peptides. The polypeptide is Di-/tripeptide transporter (dtpT) (Lactobacillus helveticus (Lactobacillus suntoryeus)).